The primary structure comprises 305 residues: MNIRDLEYLVALAEHRHFRRAADSCHVSQPTLSGQIRKLEDELGVMLLERTSRKVLFTQAGMLLVDQARTVLREVKVLKEMASQQGETMSGPLHIGLIPTVGPYLLPHIIPMLHQTFPKLEMYLHEAQTHQLLAQLDSGKLDCVILALVKESEAFIEVPLFDEPMLLAIYEDHPWANRECVPMADLAGEKLLMLEDGHCLRDQAMGFCFEAGADEDTHFRATSLETLRNMVAAGSGITLLPALAVPPERKRDGVVYLPCIKPEPRRTIGLVYRPGSPLRSRYEQLAEAIRARMDGHFDKVLKQAV.

One can recognise an HTH lysR-type domain in the interval 1-58 (MNIRDLEYLVALAEHRHFRRAADSCHVSQPTLSGQIRKLEDELGVMLLERTSRKVLFT). Residues 18–37 (FRRAADSCHVSQPTLSGQIR) constitute a DNA-binding region (H-T-H motif). Intrachain disulfides connect C180/C259 and C199/C208. C199 is subject to Cysteine sulfenic acid (-SOH); alternate. S-glutathionyl cysteine; alternate is present on C199. The residue at position 199 (C199) is an S-nitrosocysteine; alternate.

This sequence belongs to the LysR transcriptional regulatory family. In terms of assembly, homodimer and homotetramer. Post-translationally, oxidized on Cys-199; the Cys-SOH formed in response to oxidative signaling triggers a conformational change and the onset of transcriptional activity with a specific DNA-binding affinity. Cys-199-SOH rapidly reacts with Cys-208-SH to form a disulfide bond. In terms of processing, S-nitrosylation in response to nitrosative signaling triggers a conformational change and the onset of transcriptional activity with a specific DNA-binding affinity. Glutathionylation in response to redox signaling triggers the onset of transcriptional activity with a specific DNA-binding affinity.

Its activity is regulated as follows. Activated by oxidation of Cys-199 resulting in the alternative formation of cystine, sulfenic acid, S-nitroso- or glutathione-bound cysteine. In terms of biological role, hydrogen peroxide sensor. Activates the expression of a regulon of hydrogen peroxide-inducible genes such as katG, gor, ahpC, ahpF, oxyS (a regulatory RNA), dps, fur and grxA. OxyR expression is negatively autoregulated by binding to a 43 bp region upstream of its own coding sequence. OxyR is inactivated by reduction of its essential disulfide bond by the product of GrxA, itself positively regulated by OxyR. Also has a positive regulatory effect on the production of surface proteins that control the colony morphology and auto-aggregation ability. The chain is Hydrogen peroxide-inducible genes activator (oxyR) from Escherichia coli O157:H7.